Here is a 76-residue protein sequence, read N- to C-terminus: Paralithocin 3 (76 aa).

The N-terminal stretch at 1–23 (MGPMKVLLVMLVVMVAAPHIADA) is a signal peptide. Disulfide bonds link Cys-31–Cys-62, Cys-40–Cys-58, Cys-44–Cys-56, and Cys-49–Cys-59. A Proline amide; partial modification is found at Pro-74.

The protein belongs to the paralithocin family. Post-translationally, the amidated form is probably the active form.

Has antibacterial activity, mainly against marine Gram-positive bacteria like C.maltaromaticum (MIC=25 uM), C.mobile (MIC=12.5 uM), C.divergens (MIC=25 uM) and C.funditum (MIC=12.5 uM) but also against C.glutamicum (MIC=12.5 uM). Has very little or no activity against Gram-negative bacteria. This chain is Paralithocin 3, found in Paralithodes camtschaticus (Red king crab).